The following is a 290-amino-acid chain: Arylamine N-acetyltransferase, pineal gland isozyme NAT-3 (290 aa).

C68 functions as the Acyl-thioester intermediate in the catalytic mechanism. Residues H107 and D122 contribute to the active site.

The protein belongs to the arylamine N-acetyltransferase family.

The catalysed reaction is an arylamine + acetyl-CoA = an N-acetylarylamine + CoA. It carries out the reaction an N-hydroxyarylamine + acetyl-CoA = an N-acetoxyarylamine + CoA. Functionally, catalyzes the N- or O-acetylation of various arylamine and heterocyclic amine substrates, and participates in the detoxification of a plethora of hydrazine and arylamine drugs. The polypeptide is Arylamine N-acetyltransferase, pineal gland isozyme NAT-3 (Gallus gallus (Chicken)).